Here is a 140-residue protein sequence, read N- to C-terminus: Oocyte zinc finger protein XlCOF15 (140 aa).

5 consecutive C2H2-type zinc fingers follow at residues 6 to 28 (FTCK…QKIH), 34 to 56 (FTCT…QKVH), 62 to 84 (FICT…HVIH), 90 to 112 (FTCA…RAAH), and 118 to 140 (FICT…LKSH).

This sequence belongs to the krueppel C2H2-type zinc-finger protein family.

Its subcellular location is the nucleus. May be involved in transcriptional regulation. The sequence is that of Oocyte zinc finger protein XlCOF15 from Xenopus laevis (African clawed frog).